A 354-amino-acid polypeptide reads, in one-letter code: CX3C chemokine receptor 1 (354 aa).

Over methionine 1–threonine 32 the chain is Extracellular. Residues isoleucine 33–serine 60 form a helical membrane-spanning segment. The Cytoplasmic segment spans residues arginine 61–tyrosine 70. The helical transmembrane segment at leucine 71–tyrosine 91 threads the bilayer. Topologically, residues leucine 92–lysine 104 are extracellular. Cysteines 103 and 176 form a disulfide. Residues leucine 105–isoleucine 126 form a helical membrane-spanning segment. At aspartate 127–threonine 143 the chain is on the cytoplasmic side. Residues valine 144 to phenylalanine 168 traverse the membrane as a helical segment. The Extracellular portion of the chain corresponds to threonine 169 to valine 196. The chain crosses the membrane as a helical span at residues asparagine 197–isoleucine 216. Residues glutamine 217 to arginine 232 lie on the Cytoplasmic side of the membrane. The chain crosses the membrane as a helical span at residues leucine 233–leucine 257. The Extracellular portion of the chain corresponds to lysine 258 to leucine 274. Residues alanine 275–glycine 298 traverse the membrane as a helical segment. The Cytoplasmic portion of the chain corresponds to glutamate 299–leucine 354. Position 345 is a phosphothreonine (threonine 345).

It belongs to the G-protein coupled receptor 1 family. In terms of assembly, found in a ternary complex with CX3CL1 and ITGAV:ITGB3 or ITGA4:ITGB1. In terms of processing, this protein is not N-glycosylated which is unusual for G-protein-coupled receptors. In terms of tissue distribution, specifically expressed in subsets of leukocytes: expressed in monocytes, subsets of T-cells and natural killer (NK) cells in the circulation, dendritic cells, as well as in microglia in the central nervous system (CNS). Expression level subdivides blood monocytes into two major functional subsets; CD14(+)CD16(-)-CX3CR1(low) inflammatory monocytes and CD14(low)CD16(+)CX3CR1(high) homeostatic monocytes. Expressed in myeloid-derived mucosal dendritic cells, which populate the entire lamina propria of the small intestine.

It is found in the cell membrane. Functionally, receptor for the C-X3-C chemokine fractalkine (CX3CL1) present on many early leukocyte cells; CX3CR1-CX3CL1 signaling exerts distinct functions in different tissue compartments, such as immune response, inflammation, cell adhesion and chemotaxis. CX3CR1-CX3CL1 signaling mediates cell migratory functions. Responsible for the recruitment of natural killer (NK) cells to inflamed tissues. Acts as a regulator of inflammation process leading to atherogenesis by mediating macrophage and monocyte recruitment to inflamed atherosclerotic plaques, promoting cell survival. Involved in airway inflammation by promoting interleukin 2-producing T helper (Th2) cell survival in inflamed lung. Involved in the migration of circulating monocytes to non-inflamed tissues, where they differentiate into macrophages and dendritic cells. Acts as a negative regulator of angiogenesis, probably by promoting macrophage chemotaxis. Plays a key role in brain microglia by regulating inflammatory response in the central nervous system (CNS) and regulating synapse maturation. Required to restrain the microglial inflammatory response in the CNS and the resulting parenchymal damage in response to pathological stimuli. Involved in brain development by participating in synaptic pruning, a natural process during which brain microglia eliminates extra synapses during postnatal development. Synaptic pruning by microglia is required to promote the maturation of circuit connectivity during brain development. Acts as an important regulator of the gut microbiota by controlling immunity to intestinal bacteria and fungi. Expressed in lamina propria dendritic cells in the small intestine, which form transepithelial dendrites capable of taking up bacteria in order to provide defense against pathogenic bacteria. Required to initiate innate and adaptive immune responses against dissemination of commensal fungi (mycobiota) component of the gut: expressed in mononuclear phagocytes (MNPs) and acts by promoting induction of antifungal IgG antibodies response to confer protection against disseminated C.albicans or C.auris infection. Also acts as a receptor for C-C motif chemokine CCL26, inducing cell chemotaxis. The sequence is that of CX3C chemokine receptor 1 from Mus musculus (Mouse).